We begin with the raw amino-acid sequence, 264 residues long: MTSLDITTLVISILSLIATLSISFNIYFIELRKQRERKIERLQQEAKQFIINNLDEKDFIVLCQFIYKLYKHDKHTRKIHYEFVLLNEPVQKEVFKQLEILNIVDFKDNEWIANKFSILKEIVNDYQLGNWDDYKFYENFNFAYTLFREEKCDAVFEEIKQNKFGGKNLSFHEYLNEYAHRSKESDMLAPIDYFIDQNNLNNVFDRQKHAIYKLYLLDLILNELCRSMNNDHRINNEFKYFDCEVIYVEDLYLKILYKLYFQLN.

Residues 9 to 29 traverse the membrane as a helical segment; that stretch reads LVISILSLIATLSISFNIYFI.

It localises to the membrane. This is an uncharacterized protein from Ureaplasma parvum serovar 3 (strain ATCC 700970).